Reading from the N-terminus, the 425-residue chain is E3 ubiquitin-protein ligase TRIM31 (425 aa).

The segment at 16-57 (CPICLDILQKPVTIDCGHNFCLKCITQIGETSCGFFKCPLCK) adopts an RING-type zinc-finger fold. A B box-type zinc finger spans residues 90–131 (RKEATCPRHQEMFHYFCEDDGKFLCFVCRESKDHKSHNVSLI). Cys-95, His-98, Cys-117, and His-123 together coordinate Zn(2+). Coiled coils occupy residues 126 to 162 (HNVS…VKAQ) and 270 to 307 (LELE…DENR). A disordered region spans residues 328 to 360 (HKMNKTSEPGSSSAGGRTTSGPPNHHSSAPSHS). Over residues 336–360 (PGSSSAGGRTTSGPPNHHSSAPSHS) the composition is skewed to low complexity.

Belongs to the TRIM/RBCC family. As to quaternary structure, may form oligomers. Interacts with isoform p52shc of SHC1. In terms of processing, auto-ubiquitinated (in vitro). As to expression, up-regulated in gastric adenocarcinomas.

Its subcellular location is the cytoplasm. The protein localises to the mitochondrion. It carries out the reaction S-ubiquitinyl-[E2 ubiquitin-conjugating enzyme]-L-cysteine + [acceptor protein]-L-lysine = [E2 ubiquitin-conjugating enzyme]-L-cysteine + N(6)-ubiquitinyl-[acceptor protein]-L-lysine.. It participates in protein modification; protein ubiquitination. Its function is as follows. E3 ubiquitin-protein ligase that acts as a regulator of antiviral immune response and inflammation by mediating ubiquitination of substrates. Acts as a regulator of innate immune defense against viruses by mediating 'Lys-63'-linked ubiquitination of MAVS, promoting MAVS polymerization and formation of three-stranded helical filaments on mitochondria. Acts as a negative regulator of the NLRP3 inflammasome by catalyzing 'Lys-48'-linked ubiquitination of NLRP3, leading to its degradation. Regulator of Src-induced anchorage independent cell growth. This Homo sapiens (Human) protein is E3 ubiquitin-protein ligase TRIM31.